Here is an 892-residue protein sequence, read N- to C-terminus: Major core protein OPG136 precursor (892 aa).

A propeptide spanning residues 616–698 (SPEGEETIIC…ILDRIITNAG (83 aa)) is cleaved from the precursor.

Belongs to the orthopxvirus protein OPG136 family. Interacts with P39/A4. Post-translationally, the precursor is cleaved by OPG083 to give rise to the 62 kDa mature protein during virion maturation. Proteolytic cleavage of major core proteins OPG136, OPG129, and OPG098, which occurs at a late stage of core formation, is required for production of infectious mature virions (MV).

The protein resides in the virion. Its function is as follows. Core protein 4a is the most abundant virion protein. Major component of the virion core that undergoes proteolytic processing during the immature virion (IV) to mature virion (MV) transition. This is Major core protein OPG136 precursor (OPG136) from Homo sapiens (Human).